Reading from the N-terminus, the 2226-residue chain is Rotatin (2226 aa).

The interval 295-345 is disordered; that stretch reads ARGTHHSQNPSPGSSSPRPSVVGRTGQRPRGDGQDWDAASSSGSSSHAHVN. Composition is skewed to low complexity over residues 304-318 and 332-343; these read PSPG…VVGR and AASSSGSSSHAH. Ser-310 is subject to Phosphoserine. An N6-acetyllysine modification is found at Lys-811. Positions 1534–1554 are disordered; it reads SRTSQDRDPSSLSTSETTVAP. Over residues 1543-1554 the composition is skewed to polar residues; that stretch reads SSLSTSETTVAP.

It belongs to the rotatin family. Interacts with PPP1R35; this interaction allows the mutual recruitment to the centriole.

The protein resides in the cytoplasm. It is found in the cytoskeleton. The protein localises to the cilium basal body. It localises to the microtubule organizing center. Its subcellular location is the centrosome. In terms of biological role, involved in the genetic cascade that governs left-right specification. Plays a role in the maintenance of a normal ciliary structure. Required for correct asymmetric expression of NODAL, LEFTY and PITX2. The sequence is that of Rotatin from Homo sapiens (Human).